A 160-amino-acid chain; its full sequence is SsrA-binding protein (160 aa).

Positions 136–160 are disordered; that stretch reads KRHVEKERDANREVQRAMRSKGKDD.

It belongs to the SmpB family.

The protein localises to the cytoplasm. Functionally, required for rescue of stalled ribosomes mediated by trans-translation. Binds to transfer-messenger RNA (tmRNA), required for stable association of tmRNA with ribosomes. tmRNA and SmpB together mimic tRNA shape, replacing the anticodon stem-loop with SmpB. tmRNA is encoded by the ssrA gene; the 2 termini fold to resemble tRNA(Ala) and it encodes a 'tag peptide', a short internal open reading frame. During trans-translation Ala-aminoacylated tmRNA acts like a tRNA, entering the A-site of stalled ribosomes, displacing the stalled mRNA. The ribosome then switches to translate the ORF on the tmRNA; the nascent peptide is terminated with the 'tag peptide' encoded by the tmRNA and targeted for degradation. The ribosome is freed to recommence translation, which seems to be the essential function of trans-translation. The chain is SsrA-binding protein from Ectopseudomonas mendocina (strain ymp) (Pseudomonas mendocina).